Here is a 409-residue protein sequence, read N- to C-terminus: Peptidase T (409 aa).

Residue H79 coordinates Zn(2+). D81 is a catalytic residue. D140 contacts Zn(2+). E174 serves as the catalytic Proton acceptor. 3 residues coordinate Zn(2+): E175, D197, and H379.

This sequence belongs to the peptidase M20B family. Requires Zn(2+) as cofactor.

It localises to the cytoplasm. It carries out the reaction Release of the N-terminal residue from a tripeptide.. Its function is as follows. Cleaves the N-terminal amino acid of tripeptides. This is Peptidase T from Lysinibacillus sphaericus (strain C3-41).